The sequence spans 222 residues: MRLILLGAPGAGKGTQAKFICEKFGIPQISTGDMLRAAVKAGTPLGIEAKKVMDAGGLVSDDIIIGLVKDRLQQPDCKNGYLFDGFPRTIPQAEAMKDAAVAIDYVLEIDVPFDAIIERMSGRRVHVASGRTYHVKYNPPKTEGVDDESGEPLIQRDDDKEDTVRKRLDVYENQTRPLVDYYSQWAANGNSAAKVAPPKYRKISGVGNVDEITARVFGALQD.

10 to 15 contributes to the ATP binding site; the sequence is GAGKGT. The segment at 30-59 is NMP; that stretch reads STGDMLRAAVKAGTPLGIEAKKVMDAGGLV. AMP-binding positions include T31, R36, 57–59, 85–88, and Q92; these read GLV and GFPR. The segment at 122–159 is LID; it reads GRRVHVASGRTYHVKYNPPKTEGVDDESGEPLIQRDDD. ATP contacts are provided by residues R123 and 132-133; that span reads TY. The tract at residues 138-160 is disordered; it reads NPPKTEGVDDESGEPLIQRDDDK. R156 and R167 together coordinate AMP. G207 is a binding site for ATP.

It belongs to the adenylate kinase family. In terms of assembly, monomer.

It is found in the cytoplasm. It catalyses the reaction AMP + ATP = 2 ADP. The protein operates within purine metabolism; AMP biosynthesis via salvage pathway; AMP from ADP: step 1/1. In terms of biological role, catalyzes the reversible transfer of the terminal phosphate group between ATP and AMP. Plays an important role in cellular energy homeostasis and in adenine nucleotide metabolism. This is Adenylate kinase from Ralstonia pickettii (strain 12J).